A 505-amino-acid polypeptide reads, in one-letter code: Midnolin (505 aa).

One can recognise a Ubiquitin-like domain in the interval 32-106; the sequence is MSLAIHSTTG…LTLVPTVEAG (75 aa). Disordered stretches follow at residues 155–176, 228–305, and 440–485; these read PWHRQGPQSPERGGERPQVSDF, SIAT…SRKP, and RLRR…GLDF. Residues 238–262 are compositionally biased toward low complexity; sequence RPVSSAARVPPVSSSPSSPVSPSPV. Residues 263 to 282 show a composition bias toward polar residues; the sequence is TAGTFQSHAASTTCPEQTDC. Over residues 283–300 the composition is skewed to low complexity; it reads SPPASSNTTSTPGSSPTP.

As to quaternary structure, interacts with GCK; the interaction occurs preferentially at low glucose levels. Interacts with the proteasome.

It is found in the nucleus. It localises to the cytoplasm. Its subcellular location is the cytosol. The protein resides in the nucleolus. Facilitates the ubiquitin-independent proteasomal degradation of stimulus-induced transcription factors such as FOSB, EGR1, NR4A1, and IRF4 to the proteasome for degradation. Promotes also the degradation of other substrates such as CBX4. Plays a role in inhibiting the activity of glucokinase GCK and both glucose-induced and basal insulin secretion. The protein is Midnolin of Rattus norvegicus (Rat).